The chain runs to 430 residues: Glutamate-1-semialdehyde 2,1-aminomutase (430 aa).

Residue Lys-265 is modified to N6-(pyridoxal phosphate)lysine.

The protein belongs to the class-III pyridoxal-phosphate-dependent aminotransferase family. HemL subfamily. Homodimer. It depends on pyridoxal 5'-phosphate as a cofactor.

It localises to the cytoplasm. It catalyses the reaction (S)-4-amino-5-oxopentanoate = 5-aminolevulinate. It functions in the pathway porphyrin-containing compound metabolism; protoporphyrin-IX biosynthesis; 5-aminolevulinate from L-glutamyl-tRNA(Glu): step 2/2. This Shewanella sp. (strain MR-4) protein is Glutamate-1-semialdehyde 2,1-aminomutase.